The chain runs to 112 residues: Chaperone NapD (112 aa).

Belongs to the NapD family. Interacts with the cytoplasmic NapA precursor.

It is found in the cytoplasm. In terms of biological role, chaperone for NapA, the catalytic subunit of the periplasmic nitrate reductase. It binds directly and specifically to the twin-arginine signal peptide of NapA, preventing premature interaction with the Tat translocase and premature export. This Paracoccus pantotrophus (Thiosphaera pantotropha) protein is Chaperone NapD.